A 217-amino-acid chain; its full sequence is Ribosomal RNA small subunit methyltransferase G (217 aa).

Residues Gly-78, Phe-83, 129–130 (AE), and Arg-146 each bind S-adenosyl-L-methionine.

This sequence belongs to the methyltransferase superfamily. RNA methyltransferase RsmG family.

Its subcellular location is the cytoplasm. The enzyme catalyses guanosine(527) in 16S rRNA + S-adenosyl-L-methionine = N(7)-methylguanosine(527) in 16S rRNA + S-adenosyl-L-homocysteine. Its function is as follows. Specifically methylates the N7 position of guanine in position 527 of 16S rRNA. This Geobacter sp. (strain M21) protein is Ribosomal RNA small subunit methyltransferase G.